The sequence spans 269 residues: MRYTILTKGDSKSNALKHKMINHMKDFQMVEDSENPEIVISVGGDGTLLQAFHQYSHMLSKVAFVGIHTGHLGFYADWLPHEVEKLIIEINNSEFQVIEYPLLELIVRYNDNGYETRYLALNEATMKTENGSTLVVDVNIRGKHFERFRGDGLCISTPSGSTAYNKALGGALIHPSLEAMQIAEIASINNRVFRTVGSPLVLPKHHTCLITPVNHDTIRTTIDHVSIKHKNVNAIQYRVANEKVRFARFRPFPFWKRVHDSFISSDDER.

Residue Asp45 is the Proton acceptor of the active site. NAD(+) contacts are provided by residues 45–46 (DG), 122–123 (NE), Arg149, Asp151, and Ala186.

The protein belongs to the NAD kinase family. A divalent metal cation serves as cofactor.

It is found in the cytoplasm. The enzyme catalyses NAD(+) + ATP = ADP + NADP(+) + H(+). Its function is as follows. Involved in the regulation of the intracellular balance of NAD and NADP, and is a key enzyme in the biosynthesis of NADP. Catalyzes specifically the phosphorylation on 2'-hydroxyl of the adenosine moiety of NAD to yield NADP. This Staphylococcus epidermidis (strain ATCC 35984 / DSM 28319 / BCRC 17069 / CCUG 31568 / BM 3577 / RP62A) protein is NAD kinase.